Reading from the N-terminus, the 510-residue chain is Solute carrier family 2, facilitated glucose transporter member 2 (510 aa).

Residues Met-1 to Leu-10 are Cytoplasmic-facing. Residues Val-11–Ile-31 traverse the membrane as a helical segment. Residues Asn-32–Ser-96 lie on the Extracellular side of the membrane. An N-linked (GlcNAc...) asparagine glycan is attached at Asn-62. The helical transmembrane segment at Leu-97–Gly-117 threads the bilayer. Topologically, residues Asp-118–Arg-122 are cytoplasmic. A helical transmembrane segment spans residues Ile-123–Ser-143. The Extracellular portion of the chain corresponds to Lys-144–Gly-157. Residues Ile-158–Ala-178 form a helical membrane-spanning segment. Residues Pro-179–Gln-191 are Cytoplasmic-facing. Position 191 (Gln-191) interacts with D-glucose. A helical membrane pass occupies residues Leu-192 to Asn-212. The Extracellular portion of the chain corresponds to His-213 to Leu-215. The chain crosses the membrane as a helical span at residues Trp-216–Phe-236. Residues Cys-237–Pro-301 are Cytoplasmic-facing. Residues Ile-302–Tyr-322 form a helical membrane-spanning segment. Residues Gln-312–Gln-313 and Asn-318 contribute to the D-glucose site. At Tyr-323–Pro-336 the chain is on the extracellular side. A helical transmembrane segment spans residues Val-337–Leu-357. Asn-347 serves as a coordination point for D-glucose. Residues Val-358 to Ser-365 lie on the Cytoplasmic side of the membrane. A helical transmembrane segment spans residues Leu-366–Val-386. Residues Leu-387–Thr-400 lie on the Extracellular side of the membrane. Residues Ala-401–Val-421 traverse the membrane as a helical segment. Glu-410 and Trp-418 together coordinate D-glucose. Over Ala-422–Pro-431 the chain is Cytoplasmic. Residues Ala-432–Phe-452 traverse the membrane as a helical segment. The Extracellular segment spans residues Gln-453–Tyr-454. The helical transmembrane segment at Ile-455–Phe-475 threads the bilayer. The Cytoplasmic segment spans residues Cys-476 to Leu-510. Residues Leu-490–Leu-510 are disordered.

The protein belongs to the major facilitator superfamily. Sugar transporter (TC 2.A.1.1) family. Glucose transporter subfamily. In terms of processing, N-glycosylated; required for stability and retention at the cell surface of pancreatic beta cells.

Its subcellular location is the cell membrane. The catalysed reaction is D-glucose(out) = D-glucose(in). The enzyme catalyses D-fructose(out) = D-fructose(in). It carries out the reaction L-dehydroascorbate(out) = L-dehydroascorbate(in). It catalyses the reaction D-galactose(in) = D-galactose(out). With respect to regulation, D-glucose and maltose competitively inhibit fructose transport. D-glucose, D-fructose and maltose inhibit deoxyglucose transport. Functionally, facilitative hexose transporter that mediates the transport of glucose, fructose and galactose. Likely mediates the bidirectional transfer of glucose across the plasma membrane of hepatocytes and is responsible for uptake of glucose by the beta cells; may comprise part of the glucose-sensing mechanism of the beta cell. May also participate with the Na(+)/glucose cotransporter in the transcellular transport of glucose in the small intestine and kidney. Also able to mediate the transport of dehydroascorbate. The protein is Solute carrier family 2, facilitated glucose transporter member 2 of Bos taurus (Bovine).